A 414-amino-acid chain; its full sequence is Esterase FrsA (414 aa).

Belongs to the FrsA family.

It catalyses the reaction a carboxylic ester + H2O = an alcohol + a carboxylate + H(+). Its function is as follows. Catalyzes the hydrolysis of esters. This chain is Esterase FrsA, found in Salmonella choleraesuis (strain SC-B67).